We begin with the raw amino-acid sequence, 217 residues long: Protein GrpE (217 aa).

Acidic residues-rich tracts occupy residues 1-28, 136-152, and 204-217; these read MSDDQGDAVEASSEADEEASTSPDEGDD, DILDGEGVEAIEPDPGT, and SEAEDDADGEDGDE. Disordered regions lie at residues 1-44, 135-157, and 193-217; these read MSDD…NDPA, DDILDGEGVEAIEPDPGTETDPK, and QVTVSEGPSGDSEAEDDADGEDGDE.

It belongs to the GrpE family. As to quaternary structure, homodimer.

The protein resides in the cytoplasm. Its function is as follows. Participates actively in the response to hyperosmotic and heat shock by preventing the aggregation of stress-denatured proteins, in association with DnaK and GrpE. It is the nucleotide exchange factor for DnaK and may function as a thermosensor. Unfolded proteins bind initially to DnaJ; upon interaction with the DnaJ-bound protein, DnaK hydrolyzes its bound ATP, resulting in the formation of a stable complex. GrpE releases ADP from DnaK; ATP binding to DnaK triggers the release of the substrate protein, thus completing the reaction cycle. Several rounds of ATP-dependent interactions between DnaJ, DnaK and GrpE are required for fully efficient folding. The sequence is that of Protein GrpE from Natronomonas pharaonis (strain ATCC 35678 / DSM 2160 / CIP 103997 / JCM 8858 / NBRC 14720 / NCIMB 2260 / Gabara) (Halobacterium pharaonis).